Reading from the N-terminus, the 201-residue chain is uncharacterized protein (201 aa).

The chain crosses the membrane as a helical span at residues 11 to 31 (IWKSLYLLIIVGMLYIGYILI).

The protein resides in the membrane. This is an uncharacterized protein from Rickettsia prowazekii (strain Madrid E).